Here is a 320-residue protein sequence, read N- to C-terminus: Iminosuccinate reductase (320 aa).

Lysine 67 functions as the Proton donor/acceptor in the catalytic mechanism. NAD(+) is bound by residues arginine 110, histidine 137–glutamine 138, asparagine 159, serine 199, methionine 219–aspartate 222, lysine 226, and glycine 291.

The protein belongs to the ornithine cyclodeaminase/mu-crystallin family. BhcD subfamily.

The enzyme catalyses L-aspartate + NAD(+) = iminosuccinate + NADH + H(+). Functionally, imine reductase that catalyzes the NADH-dependent reduction of iminosuccinate to L-aspartate. Is essential for the growth of P.denitrificans in the presence of glycolate and glyoxylate since it functions in glyoxylate assimilation via the beta-hydroxyaspartate cycle (BHAC). Thereby BhcD regenerates the amino group donor for the first step of the BHAC. In Paracoccus denitrificans (strain Pd 1222), this protein is Iminosuccinate reductase.